The chain runs to 524 residues: Beta-glucosidase 21 (524 aa).

A signal peptide spans 1–24; that stretch reads MALQKFPLMGLLLLLTILVSVTTA. A beta-D-glucoside is bound at residue Gln-55. N-linked (GlcNAc...) asparagine glycosylation is present at Asn-61. A beta-D-glucoside contacts are provided by residues His-158 and 203 to 204; that span reads NE. Catalysis depends on Glu-204, which acts as the Proton donor. A disulfide bridge links Cys-223 with Cys-230. Residues Tyr-346, Glu-418, Trp-468, 475-476, and Phe-484 contribute to the a beta-D-glucoside site; that span reads EW. Catalysis depends on Glu-418, which acts as the Nucleophile. A glycan (N-linked (GlcNAc...) asparagine) is linked at Asn-494. The Prevents secretion from ER motif lies at 521–524; the sequence is RDEL.

It belongs to the glycosyl hydrolase 1 family. In terms of assembly, component of the PYK10 complex, at least composed of PYK10/BGLU23, BGLU21, BGLU22, JAL22, JAL23, PBP1/JAL30, PBP2/JAL31, JAL32, JAL33, JAL34, JAL35, GLL22 and GLL23. In terms of tissue distribution, expressed exclusively in roots.

The protein localises to the endoplasmic reticulum lumen. It catalyses the reaction Hydrolysis of terminal, non-reducing beta-D-glucosyl residues with release of beta-D-glucose.. With respect to regulation, activated upon binding to PBP1 or PBP2. Beta-D-glucosidase active on scopolin &gt;&gt; esculin &gt;&gt; 4-MU-glucoside &gt; DIMBOA-glucoside. No activity with pNP-glucoside, oNP-glucoside and sinigrin as substrates. The sequence is that of Beta-glucosidase 21 from Arabidopsis thaliana (Mouse-ear cress).